Here is a 207-residue protein sequence, read N- to C-terminus: MARCKS-related protein 1-B (207 aa).

Low complexity-rich tracts occupy residues 1 to 25 (MGSQASKGGVAVEGKAAAADPAAVK) and 63 to 77 (AGAGDAIEPAPAAEG). The segment at 1–207 (MGSQASKGGV…STPAPSEQKE (207 aa)) is disordered. A lipid anchor (N-myristoyl glycine) is attached at glycine 2. Basic and acidic residues predominate over residues 78 to 90 (EAAKPEGEATKET). Positions 93–116 (KKKKKFSLKNSFKFKGISLKKSKK) are effector domain involved in lipid-binding. A compositionally biased stretch (low complexity) spans 100 to 109 (LKNSFKFKGI). Basic and acidic residues-rich tracts occupy residues 131-154 (TEEKPEENGAATEEKKEEEAKAEE) and 163-182 (PKAEEPAAKAEEPAAAKEEA). Positions 195 to 207 (ETNSTPAPSEQKE) are enriched in polar residues.

Belongs to the MARCKS family. As to expression, strongly expressed in brain and eye. Also detected at lower levels in muscle.

It is found in the cytoplasm. The protein localises to the cytoskeleton. It localises to the cell membrane. Functionally, involved in the control of cell movement by regulating actin cytoskeleton homeostasis and filopodium and lamellipodium formation. This chain is MARCKS-related protein 1-B, found in Danio rerio (Zebrafish).